Consider the following 145-residue polypeptide: Cytochrome c-type biogenesis protein CcmE (145 aa).

Residues 1-7 (MKAKHQR) are Cytoplasmic-facing. A helical; Signal-anchor for type II membrane protein membrane pass occupies residues 8–28 (LILAVAALCGVAGAGVLAASA). Residues 29-145 (LRDEAAYFRT…PKNMKAAVEG (117 aa)) are Periplasmic-facing. Residues His-123 and Tyr-127 each contribute to the heme site.

Belongs to the CcmE/CycJ family.

The protein resides in the cell inner membrane. Its function is as follows. Heme chaperone required for the biogenesis of c-type cytochromes. Transiently binds heme delivered by CcmC and transfers the heme to apo-cytochromes in a process facilitated by CcmF and CcmH. This chain is Cytochrome c-type biogenesis protein CcmE, found in Sphingopyxis alaskensis (strain DSM 13593 / LMG 18877 / RB2256) (Sphingomonas alaskensis).